Here is a 462-residue protein sequence, read N- to C-terminus: Beta-glucosidase 1A (462 aa).

Substrate-binding residues include Q20, H123, and N169. The Proton donor role is filled by E170. Residue Y301 coordinates substrate. Catalysis depends on E365, which acts as the Nucleophile. Residues W415 and 422 to 423 (EW) each bind substrate.

The protein belongs to the glycosyl hydrolase 1 family.

It carries out the reaction Hydrolysis of terminal, non-reducing beta-D-glucosyl residues with release of beta-D-glucose.. Functionally, plays an important role in cellulose degradation. Shows hydrolytic activity against several glycosidic compounds. The protein is Beta-glucosidase 1A of Phanerodontia chrysosporium (White-rot fungus).